Here is a 444-residue protein sequence, read N- to C-terminus: Tubulin beta chain (444 aa).

Positions 1–4 (MREI) match the MREI motif motif. The GTP site is built by glutamine 11, glutamate 69, serine 138, glycine 142, threonine 143, glycine 144, asparagine 204, and asparagine 226. Glutamate 69 lines the Mg(2+) pocket. Positions 421 to 444 (EYQQYQDATAEEEEDFNEEAEEEA) are disordered. Residues 429–444 (TAEEEEDFNEEAEEEA) show a composition bias toward acidic residues. Residue glutamate 438 is modified to 5-glutamyl polyglutamate.

It belongs to the tubulin family. As to quaternary structure, dimer of alpha and beta chains. A typical microtubule is a hollow water-filled tube with an outer diameter of 25 nm and an inner diameter of 15 nM. Alpha-beta heterodimers associate head-to-tail to form protofilaments running lengthwise along the microtubule wall with the beta-tubulin subunit facing the microtubule plus end conferring a structural polarity. Microtubules usually have 13 protofilaments but different protofilament numbers can be found in some organisms and specialized cells. Mg(2+) serves as cofactor. Post-translationally, some glutamate residues at the C-terminus are polyglycylated, resulting in polyglycine chains on the gamma-carboxyl group. Glycylation is mainly limited to tubulin incorporated into axonemes (cilia and flagella) whereas glutamylation is prevalent in neuronal cells, centrioles, axonemes, and the mitotic spindle. Both modifications can coexist on the same protein on adjacent residues, and lowering polyglycylation levels increases polyglutamylation, and reciprocally. The precise function of polyglycylation is still unclear. In terms of processing, some glutamate residues at the C-terminus are polyglutamylated, resulting in polyglutamate chains on the gamma-carboxyl group. Polyglutamylation plays a key role in microtubule severing by spastin (SPAST). SPAST preferentially recognizes and acts on microtubules decorated with short polyglutamate tails: severing activity by SPAST increases as the number of glutamates per tubulin rises from one to eight, but decreases beyond this glutamylation threshold.

Its subcellular location is the cytoplasm. It localises to the cytoskeleton. Its function is as follows. Tubulin is the major constituent of microtubules, a cylinder consisting of laterally associated linear protofilaments composed of alpha- and beta-tubulin heterodimers. Microtubules grow by the addition of GTP-tubulin dimers to the microtubule end, where a stabilizing cap forms. Below the cap, tubulin dimers are in GDP-bound state, owing to GTPase activity of alpha-tubulin. The protein is Tubulin beta chain (tubb) of Xenopus laevis (African clawed frog).